Reading from the N-terminus, the 509-residue chain is GMP synthase [glutamine-hydrolyzing] (509 aa).

Positions 4–193 (NVLILDFGSQ…LVKIAQVPQN (190 aa)) constitute a Glutamine amidotransferase type-1 domain. The active-site Nucleophile is the Cys79. Residues His167 and Glu169 contribute to the active site. One can recognise a GMPS ATP-PPase domain in the interval 194–384 (FTPNAFVSDM…LGIDAELLGR (191 aa)). ATP is bound at residue 221–227 (SGGVDST).

Homodimer.

The enzyme catalyses XMP + L-glutamine + ATP + H2O = GMP + L-glutamate + AMP + diphosphate + 2 H(+). It functions in the pathway purine metabolism; GMP biosynthesis; GMP from XMP (L-Gln route): step 1/1. Its function is as follows. Catalyzes the synthesis of GMP from XMP. This is GMP synthase [glutamine-hydrolyzing] from Flavobacterium psychrophilum (strain ATCC 49511 / DSM 21280 / CIP 103535 / JIP02/86).